The primary structure comprises 325 residues: MACGEFSLIARYFDRVRSSRLDVETGIGDDCALLNIPEKQTLAISTDTLVAGNHFLPDIDPADLAYKALAVNLSDLAAMGADPAWLTLALTLPEVDEPWLEAFSDSLFALLNYYDMQLIGGDTTRGPLSMTLGIHGYIPAGRALKRSGAKPGDWIYVTGTPGDSAAGLAVLQNRLQVSEETDAHYLIQRHLRPTPRILHGQALRDIASAAIDLSDGLISDLGHIVKASGCGARVDVDALPKSDAMMRHVDDGQALRWALSGGEDYELCFTVPELNRGALDVAIGQLGVPFTCIGQMSADIEGLNFVRDGMPVTFDWKGYDHFATP.

Mg(2+) contacts are provided by Asp30, Ser45, Thr46, and Asp47. His54 is a substrate binding site. Residues Asp75 and Asp122 each contribute to the Mg(2+) site. Residues 121–122 (GD) and Arg146 each bind ATP. Asp212 contributes to the Mg(2+) binding site. Ser214 provides a ligand contact to ATP. Asp215 provides a ligand contact to Mg(2+). Substrate is bound by residues Glu263 and Tyr319.

It belongs to the thiamine-monophosphate kinase family.

The enzyme catalyses thiamine phosphate + ATP = thiamine diphosphate + ADP. It participates in cofactor biosynthesis; thiamine diphosphate biosynthesis; thiamine diphosphate from thiamine phosphate: step 1/1. Functionally, catalyzes the ATP-dependent phosphorylation of thiamine-monophosphate (TMP) to form thiamine-pyrophosphate (TPP), the active form of vitamin B1. This chain is Thiamine-monophosphate kinase (thiL), found in Salmonella typhimurium (strain LT2 / SGSC1412 / ATCC 700720).